The sequence spans 489 residues: Lysine--tRNA ligase (489 aa).

Positions 399 and 406 each coordinate Mg(2+).

Belongs to the class-II aminoacyl-tRNA synthetase family. In terms of assembly, homodimer. Requires Mg(2+) as cofactor.

Its subcellular location is the cytoplasm. The catalysed reaction is tRNA(Lys) + L-lysine + ATP = L-lysyl-tRNA(Lys) + AMP + diphosphate. The chain is Lysine--tRNA ligase (lysS) from Mycoplasma pneumoniae (strain ATCC 29342 / M129 / Subtype 1) (Mycoplasmoides pneumoniae).